The following is a 112-amino-acid chain: MKKIEAIVRAEKFPEVKAALEERGFYGMTVTDVKGRGQQGGMQIQFRGRTMEVTLLPKVKLEIVVKDDAVEEVIGLIVNSAFTGSPGDGKIFIIPVEDVVRIRTGERGDDSL.

ADP is bound by residues Thr29, 38–39, Val64, and 87–90; these read QQ and GDGK. ATP contacts are provided by residues Thr29, 38–39, Val64, 87–90, and 101–103; these read QQ, GDGK, and RIR.

It belongs to the P(II) protein family. Homotrimer. Interacts and forms a complex with Amt2.

It is found in the cytoplasm. Binding of adenosine nucleotides results in distinct, cooperative behavior for ATP and ADP. GlnK2 is completely insensitive to 2-oxoglutarate at a low level of intracellular nitrogen. Involved in the regulation of nitrogen metabolism. Regulates the activity of its targets by protein-protein interaction in response to the nitrogen status of the cell. Regulates the activity of the ammonia channel Amt2 via direct interaction. The protein is Nitrogen regulatory protein GlnK2 of Archaeoglobus fulgidus (strain ATCC 49558 / DSM 4304 / JCM 9628 / NBRC 100126 / VC-16).